A 91-amino-acid chain; its full sequence is Small membrane A-kinase anchor protein (91 aa).

Residue Gly-2 is the site of N-myristoyl glycine attachment.

This sequence belongs to the small membrane AKAP family. May be palmitoylated at Cys-3.

Its subcellular location is the cell membrane. Binds to type I regulatory subunits of protein kinase A and may anchor/target them to the plasma membrane. The protein is Small membrane A-kinase anchor protein of Xenopus tropicalis (Western clawed frog).